The following is a 244-amino-acid chain: Venom nerve growth factor 3 (244 aa).

The N-terminal stretch at 1 to 18 is a signal peptide; that stretch reads MSMLCYTLIIAFLIGIWA. The propeptide occupies 19–125; that stretch reads APKSEDNVPL…TLNRNIRAKR (107 aa). Residues 47-66 are compositionally biased toward basic and acidic residues; it reads GLKTSRNTDQRHPAPKKAED. The segment at 47–67 is disordered; sequence GLKTSRNTDQRHPAPKKAEDQ. 3 disulfides stabilise this stretch: cysteine 139–cysteine 205, cysteine 181–cysteine 233, and cysteine 193–cysteine 235.

The protein belongs to the NGF-beta family. In terms of assembly, homodimer; non-covalently linked. In terms of tissue distribution, expressed by the venom gland.

It localises to the secreted. In terms of biological role, nerve growth factor is important for the development and maintenance of the sympathetic and sensory nervous systems. It stimulates division and differentiation of sympathetic and embryonic sensory neurons as well as basal forebrain cholinergic neurons in the brain. Its relevance in the snake venom is not clear. However, it has been shown to inhibit metalloproteinase-dependent proteolysis of platelet glycoprotein Ib alpha, suggesting a metalloproteinase inhibition to prevent metalloprotease autodigestion and/or protection against prey proteases. Binds a lipid between the two protein chains in the homodimer. The lipid-bound form promotes histamine relase from mouse mast cells, contrary to the lipid-free form. In Notechis scutatus scutatus (Mainland tiger snake), this protein is Venom nerve growth factor 3.